A 295-amino-acid chain; its full sequence is Glycine N-acyltransferase (295 aa).

N6-acetyllysine; alternate occurs at positions 15, 126, and 140. Lys-15, Lys-126, and Lys-140 each carry N6-succinyllysine; alternate. Lys-158 carries the N6-acetyllysine modification. At Lys-168 the chain carries N6-succinyllysine. Lys-255 carries the post-translational modification N6-acetyllysine; alternate. Lys-255 bears the N6-succinyllysine; alternate mark.

This sequence belongs to the glycine N-acyltransferase family. Detected in liver (at protein level).

The protein localises to the mitochondrion. It carries out the reaction an acyl-CoA + glycine = an N-acylglycine + CoA + H(+). The catalysed reaction is benzoyl-CoA + glycine = N-benzoylglycine + CoA + H(+). Functionally, mitochondrial acyltransferase which transfers an acyl group to the N-terminus of glycine and glutamine, although much less efficiently. Can conjugate a multitude of substrates to form a variety of N-acylglycines, thereby detoxify xenobiotics, such as benzoic acid or salicylic acid, and endogenous organic acids, such as isovaleric acid. The sequence is that of Glycine N-acyltransferase (GLYAT) from Bos taurus (Bovine).